Consider the following 145-residue polypeptide: ATP synthase epsilon chain (145 aa).

This sequence belongs to the ATPase epsilon chain family. As to quaternary structure, F-type ATPases have 2 components, CF(1) - the catalytic core - and CF(0) - the membrane proton channel. CF(1) has five subunits: alpha(3), beta(3), gamma(1), delta(1), epsilon(1). CF(0) has three main subunits: a, b and c.

The protein resides in the cell membrane. Its function is as follows. Produces ATP from ADP in the presence of a proton gradient across the membrane. The protein is ATP synthase epsilon chain of Buchnera aphidicola subsp. Baizongia pistaciae (strain Bp).